Here is a 72-residue protein sequence, read N- to C-terminus: UPF0352 protein CGSHiGG_07710 (72 aa).

It belongs to the UPF0352 family.

The chain is UPF0352 protein CGSHiGG_07710 from Haemophilus influenzae (strain PittGG).